Reading from the N-terminus, the 196-residue chain is Phosphatidyl-N-methylethanolamine N-methyltransferase (196 aa).

Methionine 1 is a topological domain (lumenal). Residues 2 to 28 constitute an intramembrane region (helical); that stretch reads AIFEINNSFLICAVSIALNPLLWNIAA. At 29 to 40 the chain is on the lumenal side; it reads RSEYNHKTLTKL. Residues 41–62 form a helical membrane-spanning segment; the sequence is ANGDSKKACYMLAACIFVAGIV. The Cytoplasmic portion of the chain corresponds to 63-89; that stretch reads RDLIYQNALKQQPTLGIFMNPLVQGIA. The helical transmembrane segment at 90-110 threads the bilayer; the sequence is KLIFCFGSVLVLSSMYKLGLV. 94–96 lines the S-adenosyl-L-methionine pocket; sequence CFG. The Lumenal segment spans residues 111–153; the sequence is GTYLGDYFGFLLPERVSGFPFNVNDNPMYNGSTLCFLSTALRY. Residues 154-174 form a helical membrane-spanning segment; the sequence is GKVAGLLLTLEVFFVYRIALK. Residues 175-196 lie on the Cytoplasmic side of the membrane; it reads FEEPFTAKIYAARDSKQAKKSE. 176-177 is a binding site for S-adenosyl-L-methionine; that stretch reads EE.

It belongs to the class VI-like SAM-binding methyltransferase superfamily. PEMT/PEM2 methyltransferase family.

The protein localises to the endoplasmic reticulum membrane. It is found in the mitochondrion membrane. The enzyme catalyses a 1,2-diacyl-sn-glycero-3-phospho-N-methylethanolamine + S-adenosyl-L-methionine = a 1,2-diacyl-sn-glycero-3-phospho-N,N-dimethylethanolamine + S-adenosyl-L-homocysteine + H(+). It carries out the reaction a 1,2-diacyl-sn-glycero-3-phospho-N,N-dimethylethanolamine + S-adenosyl-L-methionine = a 1,2-diacyl-sn-glycero-3-phosphocholine + S-adenosyl-L-homocysteine + H(+). Its pathway is phospholipid metabolism; phosphatidylcholine biosynthesis. Catalyzes the second two steps of the methylation pathway of phosphatidylcholine biosynthesis, the SAM-dependent methylation of phosphatidylmonomethylethanolamine (PMME) to phosphatidyldimethylethanolamine (PDME) and of PDME to phosphatidylcholine (PC). The protein is Phosphatidyl-N-methylethanolamine N-methyltransferase of Schizosaccharomyces pombe (strain 972 / ATCC 24843) (Fission yeast).